Reading from the N-terminus, the 361-residue chain is Septin-12 (361 aa).

A Septin-type G domain is found at Met45–Glu316. The tract at residues Met45–His318 is interaction with SEPTIN7. The G1 motif stretch occupies residues Gly55 to Ser62. Residues Gly55 to Ser62, Thr88, Gly114, Arg194 to Glu202, Gly250, and Arg265 contribute to the GTP site. Positions Asp111 to Gly114 are G3 motif. A G4 motif region spans residues Ala193 to Asp196. The self-association (via N-terminus) to polymerize octameric septin 12-7-6-2/4-2/4-6-7-12 filaments stretch occupies residues Val257–Phe361. Residues Pro333–Phe361 are disordered. Residues Thr338–Ala347 are compositionally biased toward low complexity.

It belongs to the TRAFAC class TrmE-Era-EngA-EngB-Septin-like GTPase superfamily. Septin GTPase family. As to quaternary structure, septins polymerize into heterooligomeric protein complexes that form filaments, and can associate with cellular membranes, actin filaments and microtubules. GTPase activity is required for filament formation. Interacts with SEPTIN6 and SEPTIN11. Component of a octameric complex consisting of SEPTIN12, SEPTIN7, SEPTIN6 and SEPTIN2 or SEPTIN4 in the order 12-7-6-2-2-6-7-12 or 12-7-6-4-4-6-7-12 and located in the sperm annulus; the octamer polymerizes into filaments via the SEPTIN12 N- and C-termini; the SEPTIN12:SEPTIN7 association is mediated by the GTP-binding domains. Interacts with SPAG4 and LMNB1. Associates with alpha- and beta-tubulins.

Its subcellular location is the cytoplasm. The protein resides in the cytoskeleton. The protein localises to the spindle. It localises to the cell projection. It is found in the cilium. Its subcellular location is the flagellum. Functionally, filament-forming cytoskeletal GTPase. May play a role in cytokinesis (Potential). Involved in spermatogenesis. Involved in the morphogenesis of sperm heads and the elongation of sperm tails probably implicating the association with alpha- and beta-tubulins. Forms a filamentous structure with SEPTIN7, SEPTIN6, SEPTIN2 and probably SEPTIN4 at the sperm annulus which is required for the structural integrity and motility of the sperm tail during postmeiotic differentiation. This chain is Septin-12, found in Bos taurus (Bovine).